The chain runs to 1232 residues: DNA-directed RNA polymerase subunit beta (1232 aa).

The disordered stretch occupies residues 1170-1232 (SVDEDADELE…LDLDDFGDEH (63 aa)). A compositionally biased stretch (acidic residues) spans 1171-1180 (VDEDADELEV). Residues 1189 to 1198 (PEEKEEKEKE) show a composition bias toward basic and acidic residues. Residues 1199–1232 (DSDEYDDLREEDVEPDLEELSLDDLDLDDFGDEH) are compositionally biased toward acidic residues.

The protein belongs to the RNA polymerase beta chain family. As to quaternary structure, the RNAP catalytic core consists of 2 alpha, 1 beta, 1 beta' and 1 omega subunit. When a sigma factor is associated with the core the holoenzyme is formed, which can initiate transcription.

The catalysed reaction is RNA(n) + a ribonucleoside 5'-triphosphate = RNA(n+1) + diphosphate. Its function is as follows. DNA-dependent RNA polymerase catalyzes the transcription of DNA into RNA using the four ribonucleoside triphosphates as substrates. This chain is DNA-directed RNA polymerase subunit beta, found in Clostridium botulinum (strain Okra / Type B1).